Here is a 418-residue protein sequence, read N- to C-terminus: Tyrosine--tRNA ligase 1 (418 aa).

L-tyrosine is bound at residue Y34. The short motif at 39–48 is the 'HIGH' region element; it reads PTADSLHIGH. The L-tyrosine site is built by Y169 and Q173. The short motif at 230 to 234 is the 'KMSKS' region element; it reads KFGKT. K233 contacts ATP. One can recognise an S4 RNA-binding domain in the interval 352 to 418; the sequence is TVLIDLLVES…GKKKYFLIRY (67 aa).

Belongs to the class-I aminoacyl-tRNA synthetase family. TyrS type 1 subfamily. As to quaternary structure, homodimer.

It localises to the cytoplasm. The enzyme catalyses tRNA(Tyr) + L-tyrosine + ATP = L-tyrosyl-tRNA(Tyr) + AMP + diphosphate + H(+). Catalyzes the attachment of tyrosine to tRNA(Tyr) in a two-step reaction: tyrosine is first activated by ATP to form Tyr-AMP and then transferred to the acceptor end of tRNA(Tyr). The chain is Tyrosine--tRNA ligase 1 from Bacillus anthracis.